We begin with the raw amino-acid sequence, 173 residues long: DNA N-6-adenine-methyltransferase (173 aa).

Belongs to the N(4)/N(6)-methyltransferase family.

It carries out the reaction a 2'-deoxyadenosine in DNA + S-adenosyl-L-methionine = an N(6)-methyl-2'-deoxyadenosine in DNA + S-adenosyl-L-homocysteine + H(+). In terms of biological role, methyltransferase that methylates adenine residues in the ssDNA and dsDNA sequence 5'-GATC-3'. May prevent degradation of viral DNA by the host restriction-modification antiviral defense system. This chain is DNA N-6-adenine-methyltransferase, found in Haemophilus influenzae (Bacteriophage HP1).